A 309-amino-acid polypeptide reads, in one-letter code: Thiamine-monophosphate kinase (309 aa).

Mg(2+)-binding residues include Asp25, Thr39, Ser40, and Asp41. Asp48 provides a ligand contact to substrate. Mg(2+) contacts are provided by Asp69 and Asp117. Residues 116-117 and Arg140 contribute to the ATP site; that span reads GD. Asp201 lines the Mg(2+) pocket. Ser203 is an ATP binding site. Asp204 is a binding site for Mg(2+). Substrate contacts are provided by Glu250 and Trp298.

This sequence belongs to the thiamine-monophosphate kinase family.

The enzyme catalyses thiamine phosphate + ATP = thiamine diphosphate + ADP. It participates in cofactor biosynthesis; thiamine diphosphate biosynthesis; thiamine diphosphate from thiamine phosphate: step 1/1. Its function is as follows. Catalyzes the ATP-dependent phosphorylation of thiamine-monophosphate (TMP) to form thiamine-pyrophosphate (TPP), the active form of vitamin B1. The polypeptide is Thiamine-monophosphate kinase (Pyrococcus horikoshii (strain ATCC 700860 / DSM 12428 / JCM 9974 / NBRC 100139 / OT-3)).